The following is a 190-amino-acid chain: METLKRKIIDEGRLLDGHILKVDNFLNHQIDVRLMNDIGQAFAERFAGTRIDKILTIEASGIAVAAIASQYFGFVPVVFGKKTQSLNLDAEAFESEVYSYTKQTSYKVRVSKRYLRPGEQVLIIDDFLANGAAASGLIDIVRQAGAEPVGVGIVIEKGFQPGRSKIEAHGIRVESLAIIQSFDDNQVHFG.

Residues Leu-20 and Asn-27 each contribute to the xanthine site. Residue Ala-129–Ala-133 participates in 5-phospho-alpha-D-ribose 1-diphosphate binding. Residue Lys-157 coordinates xanthine.

It belongs to the purine/pyrimidine phosphoribosyltransferase family. Xpt subfamily. Homodimer.

It localises to the cytoplasm. It catalyses the reaction XMP + diphosphate = xanthine + 5-phospho-alpha-D-ribose 1-diphosphate. Its pathway is purine metabolism; XMP biosynthesis via salvage pathway; XMP from xanthine: step 1/1. Its function is as follows. Converts the preformed base xanthine, a product of nucleic acid breakdown, to xanthosine 5'-monophosphate (XMP), so it can be reused for RNA or DNA synthesis. The sequence is that of Xanthine phosphoribosyltransferase from Laribacter hongkongensis (strain HLHK9).